The primary structure comprises 300 residues: tRNA pseudouridine synthase A (300 aa).

Asp-67 functions as the Nucleophile in the catalytic mechanism. Tyr-125 lines the substrate pocket.

The protein belongs to the tRNA pseudouridine synthase TruA family. In terms of assembly, homodimer.

It catalyses the reaction uridine(38/39/40) in tRNA = pseudouridine(38/39/40) in tRNA. Its function is as follows. Formation of pseudouridine at positions 38, 39 and 40 in the anticodon stem and loop of transfer RNAs. The chain is tRNA pseudouridine synthase A from Synechococcus sp. (strain CC9902).